The primary structure comprises 212 residues: Ras-related protein Rab-2A (212 aa).

Ala2 bears the N-acetylalanine mark. Residues 2-19 (AYAYLFKYIIIGDTGVGK) are required for interaction with PRKCI. Positions 16, 17, 18, 19, 20, 21, and 38 each coordinate GTP. A Mg(2+)-binding site is contributed by Ser20. Positions 37-42 (LTIGVE) match the Switch 1 motif. 2 residues coordinate Mg(2+): Thr38 and Asp61. A Switch 2 motif is present at residues 63–72 (AGQESFRSIT). 6 residues coordinate GTP: Gly64, Asn119, Lys120, Asp122, Ala150, and Lys151. Residues 190 to 212 (QHAATNASHGSNQGGQQAGGGCC) form a disordered region. Gly residues predominate over residues 201–212 (NQGGQQAGGGCC). 2 S-geranylgeranyl cysteine lipidation sites follow: Cys211 and Cys212.

Belongs to the small GTPase superfamily. Rab family. Interacts with PRKCI. Interacts with TRIP11. Interacts (in GTP-bound form) with GARIN1B. Interacts (GTP-bound) with HOPS complex component VPS39; interaction contributes to obtaining a functional HOPS complex that promotes autophagosome-lysosome membrane fusion driven by STX17-SNAP29-VAMP8. Interacts with VPS41. The cofactor is Mg(2+). Prenylated. Prenylation is required for association with cellular membranes.

The protein localises to the endoplasmic reticulum-Golgi intermediate compartment membrane. The protein resides in the melanosome. It is found in the endoplasmic reticulum membrane. Its subcellular location is the golgi apparatus membrane. It localises to the cytoplasmic vesicle. The protein localises to the secretory vesicle. The protein resides in the acrosome. It is found in the autophagosome membrane. It catalyses the reaction GTP + H2O = GDP + phosphate + H(+). With respect to regulation, regulated by guanine nucleotide exchange factors (GEFs) which promote the exchange of bound GDP for free GTP, GTPase activating proteins (GAPs) which increase the GTP hydrolysis activity, and GDP dissociation inhibitors (GDIs) which inhibit the dissociation of the nucleotide from the GTPase. Its function is as follows. The small GTPases Rab are key regulators of intracellular membrane trafficking, from the formation of transport vesicles to their fusion with membranes. Rabs cycle between active GTP-bound and inactive GDP-bound states. In their active state, drive transport of vesicular carriers from donor organelles to acceptor organelles to regulate the membrane traffic that maintains organelle identity and morphology. RAB2A regulates autophagy by promoting autophagosome-lysosome fusion via recruitment of the HOPS endosomal tethering complex; this process involves autophagosomal RAB2A and lysosomal RAB39A recruitment of HOPS subcomplexes VPS39-VPS11 and VPS41-VPS16-VPS18-VPS33A, respectively, which assemble into a functional complex to mediate membrane tethering and SNAREs-driven membrane fusion. Required for protein transport from the endoplasmic reticulum to the Golgi complex. Regulates the compacted morphology of the Golgi. Together with RAB2B, redundantly required for efficient autophagic flux. The chain is Ras-related protein Rab-2A from Mus musculus (Mouse).